We begin with the raw amino-acid sequence, 222 residues long: Eukaryotic translation initiation factor 3 subunit K (222 aa).

Residues 46–208 (YDLEANLAVL…KIKTKNITEK (163 aa)) form the PCI domain.

Belongs to the eIF-3 subunit K family. In terms of assembly, component of the eukaryotic translation initiation factor 3 (eIF-3) complex. The eIF-3 complex interacts with pix.

The protein localises to the cytoplasm. Component of the eukaryotic translation initiation factor 3 (eIF-3) complex, which is involved in protein synthesis of a specialized repertoire of mRNAs and, together with other initiation factors, stimulates binding of mRNA and methionyl-tRNAi to the 40S ribosome. The eIF-3 complex specifically targets and initiates translation of a subset of mRNAs involved in cell proliferation. The protein is Eukaryotic translation initiation factor 3 subunit K of Drosophila virilis (Fruit fly).